Consider the following 344-residue polypeptide: Glycerol-3-phosphate dehydrogenase [NAD(P)+] (344 aa).

Tryptophan 11, arginine 31, arginine 32, and lysine 105 together coordinate NADPH. Residues lysine 105, glycine 133, and serine 135 each contribute to the sn-glycerol 3-phosphate site. Alanine 137 contributes to the NADPH binding site. Sn-glycerol 3-phosphate is bound by residues lysine 188, aspartate 241, serine 251, arginine 252, and asparagine 253. Catalysis depends on lysine 188, which acts as the Proton acceptor. Arginine 252 provides a ligand contact to NADPH. Position 278 (glutamate 278) interacts with NADPH.

This sequence belongs to the NAD-dependent glycerol-3-phosphate dehydrogenase family.

It is found in the cytoplasm. The catalysed reaction is sn-glycerol 3-phosphate + NAD(+) = dihydroxyacetone phosphate + NADH + H(+). The enzyme catalyses sn-glycerol 3-phosphate + NADP(+) = dihydroxyacetone phosphate + NADPH + H(+). The protein operates within membrane lipid metabolism; glycerophospholipid metabolism. Catalyzes the reduction of the glycolytic intermediate dihydroxyacetone phosphate (DHAP) to sn-glycerol 3-phosphate (G3P), the key precursor for phospholipid synthesis. The sequence is that of Glycerol-3-phosphate dehydrogenase [NAD(P)+] from Acidithiobacillus ferrooxidans (strain ATCC 23270 / DSM 14882 / CIP 104768 / NCIMB 8455) (Ferrobacillus ferrooxidans (strain ATCC 23270)).